The primary structure comprises 346 residues: Histidinol-phosphate aminotransferase (346 aa).

At K209 the chain carries N6-(pyridoxal phosphate)lysine.

This sequence belongs to the class-II pyridoxal-phosphate-dependent aminotransferase family. Histidinol-phosphate aminotransferase subfamily. In terms of assembly, homodimer. The cofactor is pyridoxal 5'-phosphate.

The enzyme catalyses L-histidinol phosphate + 2-oxoglutarate = 3-(imidazol-4-yl)-2-oxopropyl phosphate + L-glutamate. It functions in the pathway amino-acid biosynthesis; L-histidine biosynthesis; L-histidine from 5-phospho-alpha-D-ribose 1-diphosphate: step 7/9. The sequence is that of Histidinol-phosphate aminotransferase from Aliivibrio fischeri (strain ATCC 700601 / ES114) (Vibrio fischeri).